Consider the following 160-residue polypeptide: Cyclic pyranopterin monophosphate synthase (160 aa).

Substrate-binding positions include 74-76 (LSH) and 112-113 (ME). The active site involves Asp127.

This sequence belongs to the MoaC family. In terms of assembly, homohexamer; trimer of dimers.

The catalysed reaction is (8S)-3',8-cyclo-7,8-dihydroguanosine 5'-triphosphate = cyclic pyranopterin phosphate + diphosphate. It participates in cofactor biosynthesis; molybdopterin biosynthesis. In terms of biological role, catalyzes the conversion of (8S)-3',8-cyclo-7,8-dihydroguanosine 5'-triphosphate to cyclic pyranopterin monophosphate (cPMP). The sequence is that of Cyclic pyranopterin monophosphate synthase from Geobacter metallireducens (strain ATCC 53774 / DSM 7210 / GS-15).